We begin with the raw amino-acid sequence, 405 residues long: 4-hydroxy-3-methylbut-2-en-1-yl diphosphate synthase (flavodoxin) (405 aa).

Residues C297, C300, C343, and E350 each coordinate [4Fe-4S] cluster.

It belongs to the IspG family. It depends on [4Fe-4S] cluster as a cofactor.

The catalysed reaction is (2E)-4-hydroxy-3-methylbut-2-enyl diphosphate + oxidized [flavodoxin] + H2O + 2 H(+) = 2-C-methyl-D-erythritol 2,4-cyclic diphosphate + reduced [flavodoxin]. It participates in isoprenoid biosynthesis; isopentenyl diphosphate biosynthesis via DXP pathway; isopentenyl diphosphate from 1-deoxy-D-xylulose 5-phosphate: step 5/6. Its function is as follows. Converts 2C-methyl-D-erythritol 2,4-cyclodiphosphate (ME-2,4cPP) into 1-hydroxy-2-methyl-2-(E)-butenyl 4-diphosphate. The chain is 4-hydroxy-3-methylbut-2-en-1-yl diphosphate synthase (flavodoxin) from Francisella tularensis subsp. mediasiatica (strain FSC147).